The sequence spans 473 residues: Bifunctional protein HldE (473 aa).

The segment at 1 to 318 (MKLSMPRFDQ…RAVQREEGSE (318 aa)) is ribokinase. 194–197 (NLGE) contributes to the ATP binding site. The active site involves D263. A cytidylyltransferase region spans residues 343-473 (FTNGCFDILH…TAIVEKIRKA (131 aa)).

The protein in the N-terminal section; belongs to the carbohydrate kinase PfkB family. This sequence in the C-terminal section; belongs to the cytidylyltransferase family. Homodimer.

The enzyme catalyses D-glycero-beta-D-manno-heptose 7-phosphate + ATP = D-glycero-beta-D-manno-heptose 1,7-bisphosphate + ADP + H(+). It catalyses the reaction D-glycero-beta-D-manno-heptose 1-phosphate + ATP + H(+) = ADP-D-glycero-beta-D-manno-heptose + diphosphate. Its pathway is nucleotide-sugar biosynthesis; ADP-L-glycero-beta-D-manno-heptose biosynthesis; ADP-L-glycero-beta-D-manno-heptose from D-glycero-beta-D-manno-heptose 7-phosphate: step 1/4. The protein operates within nucleotide-sugar biosynthesis; ADP-L-glycero-beta-D-manno-heptose biosynthesis; ADP-L-glycero-beta-D-manno-heptose from D-glycero-beta-D-manno-heptose 7-phosphate: step 3/4. In terms of biological role, catalyzes the phosphorylation of D-glycero-D-manno-heptose 7-phosphate at the C-1 position to selectively form D-glycero-beta-D-manno-heptose-1,7-bisphosphate. Its function is as follows. Catalyzes the ADP transfer from ATP to D-glycero-beta-D-manno-heptose 1-phosphate, yielding ADP-D-glycero-beta-D-manno-heptose. The protein is Bifunctional protein HldE of Stutzerimonas stutzeri (strain A1501) (Pseudomonas stutzeri).